The sequence spans 419 residues: CinA-like protein (419 aa).

It belongs to the CinA family.

The protein is CinA-like protein of Synechococcus sp. (strain CC9902).